A 1043-amino-acid chain; its full sequence is Protein SLOW WALKER 2 (1043 aa).

Disordered stretches follow at residues 32 to 113 (SALP…SIDD), 444 to 469 (QGAD…VSTD), 632 to 737 (DIEH…GGYD), and 861 to 1043 (SKKK…KASE). Positions 44–51 (FRKPAKSK) match the Nuclear localization signal 1 motif. Residues 47-59 (PAKSKTQKRKKPK) show a composition bias toward basic residues. 2 stretches are compositionally biased toward basic and acidic residues: residues 80-95 (EKGK…KDAP) and 444-466 (QGAD…KQEV). Residues 441–448 (NRKQGADD) carry the Nuclear localization signal 2 motif. A compositionally biased stretch (acidic residues) spans 632–645 (DIEHFEDVIEGDDV). Positions 646 to 673 (DPNKKAENDENVVEVDHDGVEKSSRDGD) are enriched in basic and acidic residues. Acidic residues-rich tracts occupy residues 688 to 699 (DEEDDNASDDSE) and 872 to 983 (EEAA…DSDG). Over residues 988-1000 (SKKKKKEKRKRKS) the composition is skewed to basic residues. Over residues 1006–1031 (EEYKHLIDQDEKEDSKTKRKATSEPT) the composition is skewed to basic and acidic residues. The short motif at 1022-1029 (TKRKATSE) is the Nuclear localization signal 3 element. The span at 1032 to 1043 (KKKKKKKSKASE) shows a compositional bias: basic residues.

The protein belongs to the CBF/MAK21 family. Interacts with RBL in both the nucleolus and nucleoplasm. Binds to NOC2. In terms of tissue distribution, mainly expressed in actively dividing tissues (e.g. root tips, lateral root primordia, shoot apices, young leaves, inflorescences and pollen grains) through the plant, including roots, stems, leaves, inflorescences, siliques and seedlings, and in gametophytes.

The protein localises to the nucleus. It is found in the nucleolus. Together with NOC2, probably involved in pre-ribosome export from the nucleus to the cytoplasm. Required for coordinated cell cycle progression during female gametophyte and pollen development. In Arabidopsis thaliana (Mouse-ear cress), this protein is Protein SLOW WALKER 2.